The sequence spans 801 residues: Phenylalanine--tRNA ligase beta subunit (801 aa).

The region spanning 39-147 (GGGLDEVVVA…TDLPLGVPVF (109 aa)) is the tRNA-binding domain. The 77-residue stretch at 401–477 (LPRRTVRFRV…RLNGYNNIPV (77 aa)) folds into the B5 domain. 4 residues coordinate Mg(2+): aspartate 455, aspartate 461, glutamate 464, and glutamate 465. The 94-residue stretch at 708 to 801 (SRFPDTFRDI…LVKKLAVTIR (94 aa)) folds into the FDX-ACB domain.

This sequence belongs to the phenylalanyl-tRNA synthetase beta subunit family. Type 1 subfamily. Tetramer of two alpha and two beta subunits. Mg(2+) is required as a cofactor.

The protein localises to the cytoplasm. It catalyses the reaction tRNA(Phe) + L-phenylalanine + ATP = L-phenylalanyl-tRNA(Phe) + AMP + diphosphate + H(+). This is Phenylalanine--tRNA ligase beta subunit from Geobacter metallireducens (strain ATCC 53774 / DSM 7210 / GS-15).